A 111-amino-acid chain; its full sequence is Translation initiation factor 1A 1 (111 aa).

A disordered region spans residues 1–26 (MTLADLKKPTSRATPSTEETFTRVRT). Positions 22–96 (TRVRTPRREN…EKADVIWKYT (75 aa)) constitute an S1-like domain.

Belongs to the eIF-1A family.

Seems to be required for maximal rate of protein biosynthesis. Enhances ribosome dissociation into subunits and stabilizes the binding of the initiator Met-tRNA(I) to 40 S ribosomal subunits. In Methanosarcina acetivorans (strain ATCC 35395 / DSM 2834 / JCM 12185 / C2A), this protein is Translation initiation factor 1A 1 (eIF1A1).